Reading from the N-terminus, the 454-residue chain is GTPase Der (454 aa).

EngA-type G domains follow at residues 4-167 (AIVA…SEDK) and 188-363 (LQLA…ASWQ). Residues 10–17 (GKPNVGKS), 56–60 (DTPGL), 121–124 (NKTE), 194–201 (GRPNCGKS), 241–245 (DTAGV), and 306–309 (NKCD) each bind GTP. In terms of domain architecture, KH-like spans 364–450 (KRVTTGTLNQ…PVRLSFVKGK (87 aa)).

Belongs to the TRAFAC class TrmE-Era-EngA-EngB-Septin-like GTPase superfamily. EngA (Der) GTPase family. Associates with the 50S ribosomal subunit.

Its function is as follows. GTPase that plays an essential role in the late steps of ribosome biogenesis. The polypeptide is GTPase Der (Orientia tsutsugamushi (strain Boryong) (Rickettsia tsutsugamushi)).